Reading from the N-terminus, the 83-residue chain is Small ribosomal subunit protein bS16 (83 aa).

The protein belongs to the bacterial ribosomal protein bS16 family.

In Herminiimonas arsenicoxydans, this protein is Small ribosomal subunit protein bS16.